Here is a 319-residue protein sequence, read N- to C-terminus: Putative replication factor C small subunit R395 (319 aa).

45 to 52 (GSPGVGKT) is an ATP binding site.

This sequence belongs to the activator 1 small subunits family. RfcS subfamily.

Part of the RFC clamp loader complex which loads the PCNA sliding clamp onto DNA. The polypeptide is Putative replication factor C small subunit R395 (Acanthamoeba polyphaga mimivirus (APMV)).